A 395-amino-acid polypeptide reads, in one-letter code: S-adenosylmethionine synthase (395 aa).

His-14 is an ATP binding site. Asp-16 lines the Mg(2+) pocket. Residue Glu-42 participates in K(+) binding. Glu-55 and Gln-98 together coordinate L-methionine. The flexible loop stretch occupies residues 98–108; that stretch reads QSPDIAMGVDK. Residues 175-177, 242-243, Asp-251, 257-258, Ala-274, and Lys-278 contribute to the ATP site; these read DGK, RF, and RK. Asp-251 is an L-methionine binding site. L-methionine is bound at residue Lys-282.

It belongs to the AdoMet synthase family. Homotetramer; dimer of dimers. The cofactor is Mg(2+). K(+) is required as a cofactor.

Its subcellular location is the cytoplasm. It carries out the reaction L-methionine + ATP + H2O = S-adenosyl-L-methionine + phosphate + diphosphate. Its pathway is amino-acid biosynthesis; S-adenosyl-L-methionine biosynthesis; S-adenosyl-L-methionine from L-methionine: step 1/1. Its function is as follows. Catalyzes the formation of S-adenosylmethionine (AdoMet) from methionine and ATP. The overall synthetic reaction is composed of two sequential steps, AdoMet formation and the subsequent tripolyphosphate hydrolysis which occurs prior to release of AdoMet from the enzyme. The sequence is that of S-adenosylmethionine synthase from Thermosipho melanesiensis (strain DSM 12029 / CIP 104789 / BI429).